The sequence spans 396 residues: Probable peptidoglycan glycosyltransferase FtsW (396 aa).

At M1–A27 the chain is on the cytoplasmic side. A helical transmembrane segment spans residues L28–I48. The Periplasmic portion of the chain corresponds to P49 to R64. Residues D65–E85 form a helical membrane-spanning segment. At K86 to R93 the chain is on the cytoplasmic side. The chain crosses the membrane as a helical span at residues L94–V114. The Periplasmic portion of the chain corresponds to N115–P122. A helical membrane pass occupies residues M123–A143. The Cytoplasmic segment spans residues S144–K157. A helical transmembrane segment spans residues L158–P178. Residues D179 to T183 are Periplasmic-facing. 2 consecutive transmembrane segments (helical) span residues V184 to F204 and V205 to R225. Over L226 to V285 the chain is Periplasmic. The chain crosses the membrane as a helical span at residues G286–F306. Over R307–K323 the chain is Cytoplasmic. Residues G324–M344 traverse the membrane as a helical segment. Residues S345 to T355 lie on the Periplasmic side of the membrane. The chain crosses the membrane as a helical span at residues F356–L376. At L377–D396 the chain is on the cytoplasmic side.

Belongs to the SEDS family. FtsW subfamily.

It is found in the cell inner membrane. The catalysed reaction is [GlcNAc-(1-&gt;4)-Mur2Ac(oyl-L-Ala-gamma-D-Glu-L-Lys-D-Ala-D-Ala)](n)-di-trans,octa-cis-undecaprenyl diphosphate + beta-D-GlcNAc-(1-&gt;4)-Mur2Ac(oyl-L-Ala-gamma-D-Glu-L-Lys-D-Ala-D-Ala)-di-trans,octa-cis-undecaprenyl diphosphate = [GlcNAc-(1-&gt;4)-Mur2Ac(oyl-L-Ala-gamma-D-Glu-L-Lys-D-Ala-D-Ala)](n+1)-di-trans,octa-cis-undecaprenyl diphosphate + di-trans,octa-cis-undecaprenyl diphosphate + H(+). Its pathway is cell wall biogenesis; peptidoglycan biosynthesis. In terms of biological role, peptidoglycan polymerase that is essential for cell division. The protein is Probable peptidoglycan glycosyltransferase FtsW of Pasteurella multocida (strain Pm70).